A 260-amino-acid chain; its full sequence is MALPEFSMRQLLEAGVHFGHQTQRWNPRMGPFIYGARNGIHIMDLTQTVPMLDQALQAIRDTVAKGGSILFVGTKRQAQQPIADAAEKCAQYYMNHRWLGGTLTNWQTVSQSINRLKAIDEQSERGFEGLTKKERLGMERDQGKLQASLGGIREMGGRPDLIFVIDVKKEALAVAEANKLGIPVVAVVDTNCAPDGIDYIIPGNDDASRAISLYCDLAARAALDGMSAQLGAAGVDLGAMEEAPVEEAVAAEAPAEEAQA.

Belongs to the universal ribosomal protein uS2 family.

In Roseobacter denitrificans (strain ATCC 33942 / OCh 114) (Erythrobacter sp. (strain OCh 114)), this protein is Small ribosomal subunit protein uS2.